The chain runs to 301 residues: Sulfate adenylyltransferase subunit 2 1 (301 aa).

This sequence belongs to the PAPS reductase family. CysD subfamily. In terms of assembly, heterodimer composed of CysD, the smaller subunit, and CysN.

It carries out the reaction sulfate + ATP + H(+) = adenosine 5'-phosphosulfate + diphosphate. Its pathway is sulfur metabolism; hydrogen sulfide biosynthesis; sulfite from sulfate: step 1/3. Functionally, with CysN forms the ATP sulfurylase (ATPS) that catalyzes the adenylation of sulfate producing adenosine 5'-phosphosulfate (APS) and diphosphate, the first enzymatic step in sulfur assimilation pathway. APS synthesis involves the formation of a high-energy phosphoric-sulfuric acid anhydride bond driven by GTP hydrolysis by CysN coupled to ATP hydrolysis by CysD. This is Sulfate adenylyltransferase subunit 2 1 from Shewanella sediminis (strain HAW-EB3).